The following is a 369-amino-acid chain: Terpene cyclase DEP1 (369 aa).

8 helical membrane-spanning segments follow: residues 9–29 (FFYL…FNGM), 82–102 (LLFF…LIES), 118–138 (AMVL…LYLV), 157–177 (ALLV…VPAW), 190–210 (IALF…LASI), 234–254 (LVLA…GALI), 298–318 (LFSQ…SHLL), and 342–362 (LVYL…SFAL).

This sequence belongs to the membrane-bound ascI terpene cyclase family.

The protein resides in the membrane. The protein operates within polyketide biosynthesis. Part of the gene cluster that mediates the biosynthesis of depudecin, a highly oxidized eleven-carbon linear polyketide that acts as a histone deacetylase (HDAC) inhibitor and makes a small contribution to pathogenesis. The reducing polyketide synthase DEP5 is the central enzyme in depudecin biosynthesis by yielding the backbone polyketide chain. The monooxygenases DEP2 and DEP4, as well as the uncharacterized protein DEP1, then act as tailoring enzymes to modify the intermediate polyketide chain into depudecin. The sequence is that of Terpene cyclase DEP1 from Alternaria brassicicola (Dark leaf spot agent).